Consider the following 201-residue polypeptide: Alpha-1-acid glycoprotein 2 (201 aa).

Residues methionine 1 to alanine 18 form the signal peptide. At glutamine 19 the chain carries Pyrrolidone carboxylic acid. 2 cysteine pairs are disulfide-bonded: cysteine 23–cysteine 165 and cysteine 90–cysteine 183. Asparagine 33 is a glycosylation site (N-linked (GlcNAc...) (complex) asparagine). Asparagine 56, asparagine 72, asparagine 93, and asparagine 103 each carry an N-linked (GlcNAc...) asparagine glycan.

This sequence belongs to the calycin superfamily. Lipocalin family. Post-translationally, N-glycosylated. N-glycan heterogeneity at Asn-33: Hex5HexNAc4 (minor), Hex6HexNAc5 (major) and dHex1Hex6HexNAc5 (minor). As to expression, expressed by the liver and secreted in plasma.

The protein resides in the secreted. Functionally, functions as a transport protein in the blood stream. Binds various hydrophobic ligands in the interior of its beta-barrel domain. Also binds synthetic drugs and influences their distribution and availability. Appears to function in modulating the activity of the immune system during the acute-phase reaction. This chain is Alpha-1-acid glycoprotein 2 (ORM2), found in Homo sapiens (Human).